The sequence spans 438 residues: Adenylosuccinate synthetase (438 aa).

GTP contacts are provided by residues 13–19 (GDEGKGK) and 41–43 (GHT). Aspartate 14 serves as the catalytic Proton acceptor. Residues aspartate 14 and glycine 41 each coordinate Mg(2+). IMP is bound by residues 14 to 17 (DEGK), 39 to 42 (NAGH), threonine 130, arginine 144, glutamine 225, threonine 240, and arginine 310. Histidine 42 functions as the Proton donor in the catalytic mechanism. 306–312 (ATTGRLR) is a binding site for substrate. Residues arginine 312, 338-340 (KLD), and 421-423 (STG) each bind GTP.

The protein belongs to the adenylosuccinate synthetase family. In terms of assembly, homodimer. The cofactor is Mg(2+).

It is found in the cytoplasm. The catalysed reaction is IMP + L-aspartate + GTP = N(6)-(1,2-dicarboxyethyl)-AMP + GDP + phosphate + 2 H(+). It functions in the pathway purine metabolism; AMP biosynthesis via de novo pathway; AMP from IMP: step 1/2. Functionally, plays an important role in the de novo pathway of purine nucleotide biosynthesis. Catalyzes the first committed step in the biosynthesis of AMP from IMP. The protein is Adenylosuccinate synthetase of Vibrio parahaemolyticus serotype O3:K6 (strain RIMD 2210633).